The sequence spans 1091 residues: E3 ubiquitin-protein ligase TRIM33 (1091 aa).

The segment covering 1 to 13 (MADNKGGGGGGGE) has biased composition (gly residues). A disordered region spans residues 1–87 (MADNKGGGGG…SATPASSSSS (87 aa)). Positions 52–87 (APVAAVPTDTPAEENPAPSSSSVASSSATPASSSSS) are enriched in low complexity. The segment at 97-154 (CAVCKLSLQSRDTEPKLLPCLHSFCRRCLPEPERQLSVPGGTNGDIQQVGVIRCLVCR) adopts an RING-type 1 zinc-finger fold. The segment at 180–227 (KSEQVCTSCEDNASAVGFCVECGEWLCKTCIEAHQRVKFTKDHIITNK) adopts a B box-type 1; atypical zinc-finger fold. Positions 185, 188, 209, 213, 245, 248, 268, and 273 each coordinate Zn(2+). The B box-type 2 zinc finger occupies 240-281 (QRPVFCPVHKQEQLKLFCETCDRLTCRDCQLLEHKEHRYQFL). Residues 269-361 (QLLEHKEHRY…QLESVTKERQ (93 aa)) are a coiled coil. Disordered stretches follow at residues 672-779 (LPQP…TPPL) and 821-844 (GKSA…GSNK). Positions 675 to 721 (PTSNMNPSPAPSAMSPGSTGLSNSHTPVRPPSTSSTGSRGSCGSSSR) are enriched in low complexity. The segment covering 754–763 (KQEKAEDGRR) has biased composition (basic and acidic residues). The segment covering 768–779 (LSSPESSLTPPL) has biased composition (low complexity). The PHD-type zinc finger occupies 850-897 (EDWCAVCQNGGDLLCCEKCPKVFHLTCHVPTLLSFPSGEWICTFCRDL). Residues 920-1043 (GLSPVDQMKC…LYFEEKLPAI (124 aa)) form the Bromo domain. The disordered stretch occupies residues 1051–1091 (PLPEFEAEDDDGDVTDDSDDDDFVQPRRKRLKSEERPVHIK). Over residues 1055 to 1073 (FEAEDDDGDVTDDSDDDDF) the composition is skewed to acidic residues. The segment covering 1082-1091 (KSEERPVHIK) has biased composition (basic and acidic residues).

May interact with smad4.

The protein localises to the nucleus. The enzyme catalyses S-ubiquitinyl-[E2 ubiquitin-conjugating enzyme]-L-cysteine + [acceptor protein]-L-lysine = [E2 ubiquitin-conjugating enzyme]-L-cysteine + N(6)-ubiquitinyl-[acceptor protein]-L-lysine.. It functions in the pathway protein modification; protein ubiquitination. Acts as an E3 ubiquitin-protein ligase for smad4. Promotes ectoderm embryonic development at the expense of other germ layers. Inhibits mesodermal differentiation. Promotes neural development of the ectoderm. Promotes smad4 alpha degradation via the ubiquitin proteasome pathway. May act as a transcriptional repressor. In Xenopus laevis (African clawed frog), this protein is E3 ubiquitin-protein ligase TRIM33 (trim33).